Consider the following 513-residue polypeptide: Transmembrane protein 151B (513 aa).

Residues 1 to 29 (MSPAAPVTESSAAEVHREQTDAPREPQRP) form a disordered region. Residues 14–28 (EVHREQTDAPREPQR) are compositionally biased toward basic and acidic residues. The next 3 helical transmembrane spans lie at 46-66 (CLLL…CQVT), 93-113 (YIYI…VECW), and 274-294 (LPWY…LSWP). Asn-366, Asn-418, and Asn-505 each carry an N-linked (GlcNAc...) asparagine glycan.

This sequence belongs to the TMEM151 family.

It localises to the membrane. The protein is Transmembrane protein 151B (tmem151b) of Danio rerio (Zebrafish).